Consider the following 213-residue polypeptide: 3-demethoxyubiquinol 3-hydroxylase (213 aa).

Residues Glu62, Glu92, His95, Glu144, Glu176, and His179 each coordinate Fe cation.

This sequence belongs to the COQ7 family. Fe cation serves as cofactor.

The protein resides in the cell membrane. It carries out the reaction a 5-methoxy-2-methyl-3-(all-trans-polyprenyl)benzene-1,4-diol + AH2 + O2 = a 3-demethylubiquinol + A + H2O. It functions in the pathway cofactor biosynthesis; ubiquinone biosynthesis. Functionally, catalyzes the hydroxylation of 2-nonaprenyl-3-methyl-6-methoxy-1,4-benzoquinol during ubiquinone biosynthesis. This chain is 3-demethoxyubiquinol 3-hydroxylase, found in Legionella pneumophila subsp. pneumophila (strain Philadelphia 1 / ATCC 33152 / DSM 7513).